The sequence spans 170 residues: Ureidoglycolate lyase (170 aa).

It belongs to the ureidoglycolate lyase family. As to quaternary structure, homodimer. Ni(2+) is required as a cofactor.

The enzyme catalyses (S)-ureidoglycolate = urea + glyoxylate. It functions in the pathway nitrogen metabolism; (S)-allantoin degradation. Its function is as follows. Catalyzes the catabolism of the allantoin degradation intermediate (S)-ureidoglycolate, generating urea and glyoxylate. Involved in the utilization of allantoin as nitrogen source. This Pseudomonas savastanoi pv. phaseolicola (strain 1448A / Race 6) (Pseudomonas syringae pv. phaseolicola (strain 1448A / Race 6)) protein is Ureidoglycolate lyase.